A 189-amino-acid chain; its full sequence is Probable thymidylate kinase 1 (189 aa).

9 to 16 (GIDGSGKT) contacts ATP.

This sequence belongs to the thymidylate kinase family.

It carries out the reaction dTMP + ATP = dTDP + ADP. This is Probable thymidylate kinase 1 (tmk1) from Saccharolobus solfataricus (strain ATCC 35092 / DSM 1617 / JCM 11322 / P2) (Sulfolobus solfataricus).